The chain runs to 438 residues: Dihydroorotase (438 aa).

The Zn(2+) site is built by His-58 and His-60. Residues 60 to 62 and Asn-92 each bind substrate; that span reads HLR. Zn(2+) contacts are provided by Asp-152, His-179, and His-232. Substrate is bound at residue Asn-278. Position 305 (Asp-305) interacts with Zn(2+). Asp-305 is a catalytic residue. Residues His-309 and 323 to 324 contribute to the substrate site; that span reads FG.

This sequence belongs to the metallo-dependent hydrolases superfamily. DHOase family. Class I DHOase subfamily. Requires Zn(2+) as cofactor.

The catalysed reaction is (S)-dihydroorotate + H2O = N-carbamoyl-L-aspartate + H(+). The protein operates within pyrimidine metabolism; UMP biosynthesis via de novo pathway; (S)-dihydroorotate from bicarbonate: step 3/3. Functionally, catalyzes the reversible cyclization of carbamoyl aspartate to dihydroorotate. The polypeptide is Dihydroorotase (Leifsonia xyli subsp. xyli (strain CTCB07)).